The chain runs to 423 residues: UPF0229 protein PST_0721 (423 aa).

Positions 84–109 are disordered; that stretch reads AGERIPRPQGGGGGQGAGQASNSGEG.

The protein belongs to the UPF0229 family.

This Stutzerimonas stutzeri (strain A1501) (Pseudomonas stutzeri) protein is UPF0229 protein PST_0721.